Here is a 239-residue protein sequence, read N- to C-terminus: Glycerol-3-phosphate acyltransferase (239 aa).

Helical transmembrane passes span 6 to 26 (AIALLIVFSLVIGYLMGSVMF), 61 to 81 (FLVGLCDALKGFLAFVFSFLI), 99 to 119 (YYLTYLSCFAATIGHIFPLYF), 135 to 155 (LAISLWWFVICLVLWLLVTLI), 159 to 179 (VSLASLVTFFILAIIILVPWL), and 199 to 219 (WYIILFFVLWYWPLTIAVFWL).

The protein belongs to the PlsY family. In terms of assembly, probably interacts with PlsX.

The protein resides in the cell membrane. The catalysed reaction is an acyl phosphate + sn-glycerol 3-phosphate = a 1-acyl-sn-glycero-3-phosphate + phosphate. The protein operates within lipid metabolism; phospholipid metabolism. Catalyzes the transfer of an acyl group from acyl-phosphate (acyl-PO(4)) to glycerol-3-phosphate (G3P) to form lysophosphatidic acid (LPA). This enzyme utilizes acyl-phosphate as fatty acyl donor, but not acyl-CoA or acyl-ACP. The chain is Glycerol-3-phosphate acyltransferase from Mycoplasma pneumoniae (strain ATCC 29342 / M129 / Subtype 1) (Mycoplasmoides pneumoniae).